The chain runs to 297 residues: uncharacterized protein (297 aa).

The next 6 helical transmembrane spans lie at 26–48 (FVLH…IYAI), 80–102 (NIEL…AALF), 134–156 (LFKF…INLG), 185–205 (LGIF…AIVI), 225–247 (LVDT…VAAY), and 262–284 (LVAV…VELY).

It is found in the cell membrane. This is an uncharacterized protein from Archaeoglobus fulgidus (strain ATCC 49558 / DSM 4304 / JCM 9628 / NBRC 100126 / VC-16).